Reading from the N-terminus, the 76-residue chain is Small ribosomal subunit protein bS18 (76 aa).

The protein belongs to the bacterial ribosomal protein bS18 family. Part of the 30S ribosomal subunit. Forms a tight heterodimer with protein bS6.

Its function is as follows. Binds as a heterodimer with protein bS6 to the central domain of the 16S rRNA, where it helps stabilize the platform of the 30S subunit. In Brevibacillus brevis (strain 47 / JCM 6285 / NBRC 100599), this protein is Small ribosomal subunit protein bS18.